We begin with the raw amino-acid sequence, 62 residues long: DNA-directed RNA polymerase subunit Rpo10 (62 aa).

4 residues coordinate Zn(2+): C6, C9, C43, and C44.

It belongs to the archaeal Rpo10/eukaryotic RPB10 RNA polymerase subunit family. Part of the RNA polymerase complex. Zn(2+) is required as a cofactor.

Its subcellular location is the cytoplasm. It catalyses the reaction RNA(n) + a ribonucleoside 5'-triphosphate = RNA(n+1) + diphosphate. DNA-dependent RNA polymerase (RNAP) catalyzes the transcription of DNA into RNA using the four ribonucleoside triphosphates as substrates. This Methanospirillum hungatei JF-1 (strain ATCC 27890 / DSM 864 / NBRC 100397 / JF-1) protein is DNA-directed RNA polymerase subunit Rpo10.